The sequence spans 695 residues: Elongation factor G (695 aa).

Residues 12–286 (DKIRNIGIMA…AVIDYLPSPL (275 aa)) form the tr-type G domain. GTP-binding positions include 21-28 (AHIDAGKT), 85-89 (DTPGH), and 139-142 (NKMD).

This sequence belongs to the TRAFAC class translation factor GTPase superfamily. Classic translation factor GTPase family. EF-G/EF-2 subfamily.

The protein localises to the cytoplasm. Its function is as follows. Catalyzes the GTP-dependent ribosomal translocation step during translation elongation. During this step, the ribosome changes from the pre-translocational (PRE) to the post-translocational (POST) state as the newly formed A-site-bound peptidyl-tRNA and P-site-bound deacylated tRNA move to the P and E sites, respectively. Catalyzes the coordinated movement of the two tRNA molecules, the mRNA and conformational changes in the ribosome. The polypeptide is Elongation factor G (Thermotoga neapolitana (strain ATCC 49049 / DSM 4359 / NBRC 107923 / NS-E)).